Here is a 1076-residue protein sequence, read N- to C-terminus: DNA-directed RNA polymerase subunit beta (1076 aa).

The protein belongs to the RNA polymerase beta chain family. In plastids the minimal PEP RNA polymerase catalytic core is composed of four subunits: alpha, beta, beta', and beta''. When a (nuclear-encoded) sigma factor is associated with the core the holoenzyme is formed, which can initiate transcription.

Its subcellular location is the plastid. The protein resides in the chloroplast. The enzyme catalyses RNA(n) + a ribonucleoside 5'-triphosphate = RNA(n+1) + diphosphate. In terms of biological role, DNA-dependent RNA polymerase catalyzes the transcription of DNA into RNA using the four ribonucleoside triphosphates as substrates. The sequence is that of DNA-directed RNA polymerase subunit beta from Triticum aestivum (Wheat).